The chain runs to 46 residues: Aspartate aminotransferase 1 (46 aa).

The protein belongs to the class-I pyridoxal-phosphate-dependent aminotransferase family. Homodimer. Pyridoxal 5'-phosphate serves as cofactor.

It catalyses the reaction L-aspartate + 2-oxoglutarate = oxaloacetate + L-glutamate. Functionally, important for the metabolism of amino acids and Krebs-cycle related organic acids. In plants, it is involved in nitrogen metabolism and in aspects of carbon and energy metabolism. The polypeptide is Aspartate aminotransferase 1 (Pseudotsuga menziesii (Douglas-fir)).